A 156-amino-acid chain; its full sequence is Small ribosomal subunit protein uS7 (156 aa).

The protein belongs to the universal ribosomal protein uS7 family. In terms of assembly, part of the 30S ribosomal subunit. Contacts proteins S9 and S11.

Functionally, one of the primary rRNA binding proteins, it binds directly to 16S rRNA where it nucleates assembly of the head domain of the 30S subunit. Is located at the subunit interface close to the decoding center, probably blocks exit of the E-site tRNA. This chain is Small ribosomal subunit protein uS7, found in Prochlorococcus marinus subsp. pastoris (strain CCMP1986 / NIES-2087 / MED4).